The chain runs to 145 residues: Class I hydrophobin 1 (145 aa).

Positions 1 to 19 (MKFSYAIAAVVAAAASVQA) are cleaved as a signal peptide. Disulfide bonds link cysteine 65–cysteine 126, cysteine 72–cysteine 120, cysteine 73–cysteine 106, and cysteine 127–cysteine 140. N-linked (GlcNAc...) asparagine glycans are attached at residues asparagine 80 and asparagine 129.

The protein belongs to the fungal hydrophobin family. As to quaternary structure, self-assembles to form functional amyloid fibrils called rodlets. Self-assembly into fibrillar rodlets occurs spontaneously at hydrophobic:hydrophilic interfaces and the rodlets further associate laterally to form amphipathic monolayers.

It is found in the secreted. It localises to the cell wall. Aerial growth, conidiation, and dispersal of filamentous fungi in the environment rely upon a capability of their secreting small amphipathic proteins called hydrophobins (HPBs) with low sequence identity. Class I can self-assemble into an outermost layer of rodlet bundles on aerial cell surfaces, conferring cellular hydrophobicity that supports fungal growth, development and dispersal; whereas Class II form highly ordered films at water-air interfaces through intermolecular interactions but contribute nothing to the rodlet structure. Hyd1 is a class I hydrophobin that is crucial for the initiation of primordia formation. Plays also important roles in nitrogen regulation and resistance to abiotic stresses. The chain is Class I hydrophobin 1 from Ganoderma lucidum (Ling zhi medicinal fungus).